The sequence spans 120 residues: Non-specific lipid-transfer protein 6 (120 aa).

A signal peptide spans 1-26; that stretch reads MARSMSLKLACVVVLCLLVDAPLAQG. Disulfide bonds link Cys57–Cys102 and Cys77–Cys116.

The protein belongs to the plant LTP family. In terms of tissue distribution, specifically expressed in fiber cells.

Plant non-specific lipid-transfer proteins transfer phospholipids as well as galactolipids across membranes. May play a role in wax or cutin deposition in the cell walls of expanding epidermal cells and certain secretory tissues. This Gossypium hirsutum (Upland cotton) protein is Non-specific lipid-transfer protein 6 (LTP6).